The sequence spans 138 residues: Large ribosomal subunit protein uL16 (138 aa).

Belongs to the universal ribosomal protein uL16 family. As to quaternary structure, part of the 50S ribosomal subunit.

Its function is as follows. Binds 23S rRNA and is also seen to make contacts with the A and possibly P site tRNAs. The chain is Large ribosomal subunit protein uL16 from Anaeromyxobacter sp. (strain Fw109-5).